The primary structure comprises 444 residues: Glutamyl-tRNA(Gln) amidotransferase subunit D (444 aa).

The region spanning 92–424 is the Asparaginase/glutaminase domain; that stretch reads SEIKIISTGG…EKIQNLMITN (333 aa). Catalysis depends on residues threonine 102, threonine 178, aspartate 179, and lysine 257.

Belongs to the asparaginase 1 family. GatD subfamily. Heterodimer of GatD and GatE.

It catalyses the reaction L-glutamyl-tRNA(Gln) + L-glutamine + ATP + H2O = L-glutaminyl-tRNA(Gln) + L-glutamate + ADP + phosphate + H(+). Allows the formation of correctly charged Gln-tRNA(Gln) through the transamidation of misacylated Glu-tRNA(Gln) in organisms which lack glutaminyl-tRNA synthetase. The reaction takes place in the presence of glutamine and ATP through an activated gamma-phospho-Glu-tRNA(Gln). The GatDE system is specific for glutamate and does not act on aspartate. The protein is Glutamyl-tRNA(Gln) amidotransferase subunit D of Saccharolobus solfataricus (strain ATCC 35092 / DSM 1617 / JCM 11322 / P2) (Sulfolobus solfataricus).